The following is a 214-amino-acid chain: uncharacterized protein (214 aa).

Positions 131-214 are disordered; it reads TEDILSPPSP…SSSSDSLDAY (84 aa). The span at 174–189 shows a compositional bias: basic residues; that stretch reads HRRRRTRRQLRYRQRV. Low complexity predominate over residues 197–214; it reads DLGEPLESSSSSDSLDAY.

This is an uncharacterized protein from Tupaia.